The following is a 207-amino-acid chain: Protein phosphatase inhibitor 2 (207 aa).

Disordered stretches follow at residues 1-44, 65-97, and 110-146; these read MAAS…SKKS, LMKI…ALTP, and ESLE…EMKR. Ala-2 carries the N-acetylalanine modification. A required for binding PPP1CC region spans residues 12–17; the sequence is KGILKN. Residues 19-28 show a composition bias toward low complexity; sequence SSTTSSVVST. The span at 35–44 shows a compositional bias: basic and acidic residues; the sequence is SVDEELSKKS. Positions 43 to 55 are required for binding PPP1CC; sequence KSQKWDEMSILAT. Phosphoserine; by ATM is present on Ser-44. Thr-73 is modified (phosphothreonine; by GSK3). Residues 80–91 show a composition bias toward acidic residues; it reads ADDEDALSDSET. Phosphoserine occurs at positions 87 and 89. A phosphothreonine mark is found at Thr-92 and Thr-96. Residues 112 to 122 are compositionally biased toward basic and acidic residues; sequence LEPKYRVREQE. Ser-123, Ser-124, Ser-129, and Ser-132 each carry phosphoserine. Residues 123-132 show a composition bias toward acidic residues; the sequence is SSGDEDSDLS. Basic and acidic residues predominate over residues 133–145; sequence PEEREKKRQFEMK. The segment at 149–152 is required for binding PPP1CC catalytic center, displacing metal ions and inhibition of PPP1CC catalytic activity; the sequence is HYNE. Positions 165 to 207 are disordered; the sequence is KDLNDEEEDEEMSETAAGESMNMEESSQGSATSDQLQNKSQSS. Acidic residues predominate over residues 168-177; that stretch reads NDEEEDEEMS. The segment covering 187 to 207 has biased composition (polar residues); sequence MEESSQGSATSDQLQNKSQSS.

It belongs to the protein phosphatase inhibitor 2 family. As to quaternary structure, heterodimer with PP1. In terms of processing, phosphorylation on Ser-44 by ATM activates PP1 by dissociating the PP1-PPP1R2 complex. Phosphorylation on Thr-73 by GSK3 activates PP1 by dissociating the PP1-PPP1R2 complex.

Inhibitor of protein-phosphatase 1. This is Protein phosphatase inhibitor 2 (PPP1R2) from Bos taurus (Bovine).